Here is a 503-residue protein sequence, read N- to C-terminus: Beta-amylase Tri a 17 (503 aa).

The substrate site is built by aspartate 51, histidine 91, and aspartate 99. The active-site Proton donor is the glutamate 184. Lysine 293, histidine 298, and threonine 340 together coordinate substrate. The Proton acceptor role is filled by glutamate 378. Substrate contacts are provided by residues 379–380 (NA) and arginine 418.

It belongs to the glycosyl hydrolase 14 family.

The catalysed reaction is Hydrolysis of (1-&gt;4)-alpha-D-glucosidic linkages in polysaccharides so as to remove successive maltose units from the non-reducing ends of the chains.. The chain is Beta-amylase Tri a 17 (BMY1) from Triticum aestivum (Wheat).